We begin with the raw amino-acid sequence, 329 residues long: Phenylalanine--tRNA ligase alpha subunit (329 aa).

Glutamate 254 provides a ligand contact to Mg(2+).

The protein belongs to the class-II aminoacyl-tRNA synthetase family. Phe-tRNA synthetase alpha subunit type 1 subfamily. Tetramer of two alpha and two beta subunits. Mg(2+) is required as a cofactor.

It is found in the cytoplasm. It catalyses the reaction tRNA(Phe) + L-phenylalanine + ATP = L-phenylalanyl-tRNA(Phe) + AMP + diphosphate + H(+). This is Phenylalanine--tRNA ligase alpha subunit from Histophilus somni (strain 129Pt) (Haemophilus somnus).